We begin with the raw amino-acid sequence, 793 residues long: Toll-like receptor 6 (793 aa).

Residues methionine 1–glycine 23 form the signal peptide. The Extracellular segment spans residues threonine 24–threonine 584. LRR repeat units lie at residues threonine 54 to glycine 77, leucine 78 to aspartate 101, leucine 102 to threonine 122, threonine 123 to threonine 147, glutamine 148 to alanine 168, histidine 169 to threonine 196, lysine 197 to serine 219, leucine 220 to threonine 250, leucine 251 to proline 277, isoleucine 278 to threonine 303, leucine 304 to glutamate 330, methionine 331 to threonine 354, phenylalanine 355 to arginine 378, leucine 379 to serine 404, leucine 405 to glycine 428, serine 429 to proline 449, proline 450 to glutamate 473, threonine 474 to serine 495, and serine 496 to glutamine 519. Residue asparagine 63 is glycosylated (N-linked (GlcNAc...) asparagine). The cysteines at positions 117 and 140 are disulfide-linked. The N-linked (GlcNAc...) asparagine glycan is linked to asparagine 145. Cysteine 235 and cysteine 265 are oxidised to a cystine. Asparagine 253 and asparagine 285 each carry an N-linked (GlcNAc...) asparagine glycan. Residues cysteine 348 and cysteine 373 are joined by a disulfide bond. Residue asparagine 359 is glycosylated (N-linked (GlcNAc...) asparagine). 2 N-linked (GlcNAc...) asparagine glycosylation sites follow: asparagine 423 and asparagine 434. An intrachain disulfide couples cysteine 424 to cysteine 447. An LRRCT domain is found at lysine 520 to phenylalanine 575. Residues alanine 585–leucine 605 traverse the membrane as a helical segment. Over cysteine 606 to histidine 793 the chain is Cytoplasmic. Residues leucine 640 to isoleucine 781 form the TIR domain.

Belongs to the Toll-like receptor family. In terms of assembly, homodimer (via cytoplasmic TIR domain). Heterodimer with TLR2 via their respective extracellular domains. Binds MYD88 via their respective TIR domains. Interacts with CD36, following CD36 stimulation by oxLDL or amyloid-beta 42, and forms a heterodimer with TLR4. The trimeric complex is internalized and triggers inflammatory response. LYN kinase activity facilitates TLR4-TLR6 heterodimerization and signal initiation. The heterodimer TLR2:TLR6 interacts with CD14 and CD36 in response to triacylated lipopeptides. As to expression, highest expression levels seen in blood and lymph node, intermediate expression seen in spleen and lowest expression seen in the liver, lung and udder cistern.

Its subcellular location is the cell membrane. The protein resides in the cytoplasmic vesicle. The protein localises to the phagosome membrane. It localises to the membrane raft. It is found in the golgi apparatus. Participates in the innate immune response to Gram-positive bacteria and fungi. Specifically recognizes diacylated and, to a lesser extent, triacylated lipopeptides. In response to diacylated lipopeptides, forms the activation cluster TLR2:TLR6:CD14:CD36, this cluster triggers signaling from the cell surface and subsequently is targeted to the Golgi in a lipid-raft dependent pathway. Acts via MYD88 and TRAF6, leading to NF-kappa-B activation, cytokine secretion and the inflammatory response. Recognizes mycoplasmal macrophage-activating lipopeptide-2kD (MALP-2), soluble tuberculosis factor (STF), phenol-soluble modulin (PSM) and B.burgdorferi outer surface protein A lipoprotein (OspA-L) cooperatively with TLR2. In complex with TLR4, promotes sterile inflammation in monocytes/macrophages in response to oxidized low-density lipoprotein (oxLDL) or amyloid-beta 42. In this context, the initial signal is provided by oxLDL- or amyloid-beta 42-binding to CD36. This event induces the formation of a heterodimer of TLR4 and TLR6, which is rapidly internalized and triggers inflammatory response, leading to the NF-kappa-B-dependent production of CXCL1, CXCL2 and CCL9 cytokines, via MYD88 signaling pathway, and CCL5 cytokine, via TICAM1 signaling pathway, as well as IL1B secretion. In Bos taurus (Bovine), this protein is Toll-like receptor 6.